The primary structure comprises 181 residues: ADP-ribosylation factor 1-like 2 (181 aa).

Residue glycine 2 is the site of N-myristoyl glycine attachment. Residues 3–16 form an important for the stable binding to the membranes region; sequence NVFGSLFKGLFGKK. Residues 24–32, 126–129, and alanine 160 each bind GTP; these read GLDAAGKTT and NKQD.

Belongs to the small GTPase superfamily. Arf family.

It localises to the golgi apparatus membrane. It catalyses the reaction GTP + H2O = GDP + phosphate + H(+). Its activity is regulated as follows. Alternates between an inactive GDP-bound form and an active GTP-bound form. Activated by a guanine nucleotide-exchange factor (GEF) and inactivated by GTPase-activating protein (GAP). Small GTPase involved in protein trafficking between different compartments. Modulates vesicle budding and uncoating within the Golgi complex. In its GTP-bound form, triggers the recruitment of coatomer proteins to the Golgi membrane. The hydrolysis of ARF1-bound GTP, which is mediated by ARFGAPs proteins, is required for dissociation of coat proteins from Golgi membranes and vesicles. Involved in endoplasmic reticulum dynamics during embryogenesis. Also required for adult germline function. Plays a role in cell shedding during embryogenesis probably by promoting the endocytosis of cell adhesion molecules. During neurogenesis, involved in cell autonomous Q.p neuroblast asymmetric divisions that generate one precursor cell and one apoptotic cell, probably by controlling endocytosis. Plays a role in maintaining mitochondrial morphology. This chain is ADP-ribosylation factor 1-like 2 (arf-1.2), found in Caenorhabditis briggsae.